A 1052-amino-acid polypeptide reads, in one-letter code: Eukaryotic translation initiation factor 3 subunit A (1052 aa).

Residues 92-121 adopt a coiled-coil conformation; that stretch reads LKKFIELAEKKVTEAQAKADEIQSSLESAA. The 185-residue stretch at 339 to 523 folds into the PCI domain; that stretch reads MTKAASFVLL…GVLTFDTDVF (185 aa). A coiled-coil region spans residues 580–906; that stretch reads EARLQAKRAA…AEARRAARRT (327 aa). 2 stretches are compositionally biased toward basic and acidic residues: residues 617–632 and 794–901; these read AATDALQRKQREEETR and KEVS…EARR. 2 disordered regions span residues 617–646 and 794–1052; these read AATDALQRKQREEETRKRIRTQQLQEAEKQ and KEVS…QGGQ. 2 stretches are compositionally biased toward low complexity: residues 905–927 and 948–964; these read RTGGAEPEAAPERAAPTERTAPR and KEAAGGTPAAPAAAAPE. A compositionally biased stretch (polar residues) spans 1013 to 1028; it reads GSSQPPSRTQTPGSSS.

Belongs to the eIF-3 subunit A family. Component of the eukaryotic translation initiation factor 3 (eIF-3) complex.

The protein resides in the cytoplasm. Its function is as follows. RNA-binding component of the eukaryotic translation initiation factor 3 (eIF-3) complex, which is involved in protein synthesis of a specialized repertoire of mRNAs and, together with other initiation factors, stimulates binding of mRNA and methionyl-tRNAi to the 40S ribosome. The eIF-3 complex specifically targets and initiates translation of a subset of mRNAs involved in cell proliferation. This is Eukaryotic translation initiation factor 3 subunit A (tif32) from Aspergillus niger (strain ATCC MYA-4892 / CBS 513.88 / FGSC A1513).